A 209-amino-acid polypeptide reads, in one-letter code: Dual specificity phosphatase 29 (209 aa).

Residues 44 to 193 form the Tyrosine-protein phosphatase domain; sequence NHVNEVWPNL…LRELDIQLAL (150 aa). A substrate-binding site is contributed by 137-144; it reads NCAMGRSR. Cysteine 138 serves as the catalytic Phosphocysteine intermediate.

The protein belongs to the protein-tyrosine phosphatase family. Non-receptor class dual specificity subfamily.

It localises to the cytoplasm. Its subcellular location is the nucleus. The enzyme catalyses O-phospho-L-tyrosyl-[protein] + H2O = L-tyrosyl-[protein] + phosphate. It catalyses the reaction O-phospho-L-seryl-[protein] + H2O = L-seryl-[protein] + phosphate. The catalysed reaction is O-phospho-L-threonyl-[protein] + H2O = L-threonyl-[protein] + phosphate. Its function is as follows. Dual specificity phosphatase able to dephosphorylate phosphotyrosine, phosphoserine and phosphothreonine residues within the same substrate, with a preference for phosphotyrosine as a substrate. Involved in the modulation of AMPK and MAPK1/2 signaling pathways. This is Dual specificity phosphatase 29 (dusp29) from Xenopus tropicalis (Western clawed frog).